We begin with the raw amino-acid sequence, 139 residues long: ATP synthase epsilon chain (139 aa).

The protein belongs to the ATPase epsilon chain family. F-type ATPases have 2 components, CF(1) - the catalytic core - and CF(0) - the membrane proton channel. CF(1) has five subunits: alpha(3), beta(3), gamma(1), delta(1), epsilon(1). CF(0) has three main subunits: a, b and c.

It is found in the cell membrane. Functionally, produces ATP from ADP in the presence of a proton gradient across the membrane. This Streptococcus sanguinis protein is ATP synthase epsilon chain.